We begin with the raw amino-acid sequence, 95 residues long: Integration host factor subunit beta (95 aa).

Belongs to the bacterial histone-like protein family. Heterodimer of an alpha and a beta chain.

In terms of biological role, this protein is one of the two subunits of integration host factor, a specific DNA-binding protein that functions in genetic recombination as well as in transcriptional and translational control. This is Integration host factor subunit beta from Shewanella putrefaciens (strain CN-32 / ATCC BAA-453).